We begin with the raw amino-acid sequence, 359 residues long: Protein RecA (359 aa).

Residue Gly73–Thr80 coordinates ATP.

The protein belongs to the RecA family.

Its subcellular location is the cytoplasm. In terms of biological role, can catalyze the hydrolysis of ATP in the presence of single-stranded DNA, the ATP-dependent uptake of single-stranded DNA by duplex DNA, and the ATP-dependent hybridization of homologous single-stranded DNAs. It interacts with LexA causing its activation and leading to its autocatalytic cleavage. The polypeptide is Protein RecA (Desulfovibrio desulfuricans (strain ATCC 27774 / DSM 6949 / MB)).